The following is a 722-amino-acid chain: Transmembrane channel-like protein 8 (722 aa).

Positions 1–21 (MFRQWSVQSGPAPRRPESQAA) are disordered. Topologically, residues 1 to 118 (MFRQWSVQSG…GIQSYFTFLR (118 aa)) are cytoplasmic. Phosphoserine is present on residues Ser-6 and Ser-18. Residues 119–139 (FLLLLNLLTMLLTACFVLLPL) form a helical membrane-spanning segment. The Lumenal segment spans residues 140 to 204 (VWLRPPELGP…AGPESSSEYS (65 aa)). An N-linked (GlcNAc...) asparagine glycan is attached at Asn-184. Residues 205-225 (IRLAYLLSPMVCLLLCFCGIL) traverse the membrane as a helical segment. At 226-307 (QRMAEGLPQQ…CRLLTYLRTN (82 aa)) the chain is on the cytoplasmic side. The helical transmembrane segment at 308-328 (ILIVLLVVGAISAIFWATKYS) threads the bilayer. The Lumenal segment spans residues 329 to 375 (QDNKEESLFLVLQYLPPGVISLVNFLGPQLFTVLIQLENYPPGTEVN). Residues 366 to 534 (ENYPPGTEVN…SPRRFRASSS (169 aa)) are TMC domain. A glycan (N-linked (GlcNAc...) asparagine) is linked at Asn-375. A helical transmembrane segment spans residues 376 to 396 (LTLIWCVVLKLASLGMFSFSL). Residues 397 to 430 (GQTVLCIGRNKTSCESYGYNACDYQCWENSVGEE) are Cytoplasmic-facing. Residues 431 to 451 (LYKLIIFNFLLTVAFAFLVSL) traverse the membrane as a helical segment. Topologically, residues 452 to 492 (PRRLLVERFSGWFWTWLDREEFLVPKNVLDIVAAQTVTWMG) are lumenal. Residues 493 to 513 (LFYCPLLPLLNSVFLFLTFYI) traverse the membrane as a helical segment. Residues 514-536 (KKYTLLRNSRASPRRFRASSSTF) lie on the Cytoplasmic side of the membrane. The chain crosses the membrane as a helical span at residues 537–557 (FFHLVLLLGLLLAAVPLAYVI). Residues 558-598 (SSTHSSWDCGLFTNYSAPWQVVPELVALQLPLPSQRALRYL) are Lumenal-facing. Asn-571 carries an N-linked (GlcNAc...) asparagine glycan. The chain crosses the membrane as a helical span at residues 599–619 (SSHAFSFPLLILLSIVLTVCI). The Cytoplasmic segment spans residues 620 to 722 (SQSRANARAI…RFHFPSRTEL (103 aa)). Phosphoserine is present on residues Ser-658, Ser-663, and Ser-673. The tract at residues 658–722 (SPEPGSPHSR…RFHFPSRTEL (65 aa)) is disordered. Over residues 678–687 (FPCPGSPGPR) the composition is skewed to pro residues. Over residues 689–712 (PRLAPSNRLSSSSLGAPSASVPAS) the composition is skewed to low complexity. Ser-698 is modified (phosphoserine).

This sequence belongs to the TMC family. Interacts with TMC6. Interacts and forms a complex with TMC6 and CIB1; the interaction stabilizes each component of the complex. Interacts and forms a complex with TMC6 and SLC30A1/ZNT1; the interaction regulates zinc transport into the ER. Interacts with TRADD; the interaction competes with TRADD/RIPK1/TRAF2/cIAPs complex I formation and facilites complex II formation. Expressed in thymus, lung, prostate, placenta, testis and spleen. Expressed in lymphocytes and peripheral lymphocytes.

Its subcellular location is the endoplasmic reticulum membrane. The protein localises to the golgi apparatus membrane. The protein resides in the nucleus membrane. Functionally, acts as a regulatory protein involved in the regulation of numerous cellular processes. Together with its homolog TMC6/EVER1, forms a complex with calcium-binding protein CIB1 in lymphocytes and keratynocytes where TMC6 and TMC8 stabilize CIB1 levels and reciprocally. Together with TMC6, also forms a complex with and activates zinc transporter ZNT1 at the ER membrane of keratynocytes, thereby facilitating zinc uptake into the ER. Also inhibits receptor-mediated calcium release from ER stores and calcium activated and volume regulated chloride channels. Down-regulates the activity of transcription factors induced by zinc and cytokines. Also sequesters TRADD which impairs the recruitment of TRAF2 and RIPK1 in the pro-survival complex I and promotes proapoptotic complex II formation, and may therefore be involved in TNF-induced cell death/survival decisions. This chain is Transmembrane channel-like protein 8, found in Mus musculus (Mouse).